The chain runs to 188 residues: MPVADTSQLISGVAERYASSLFELALEAGSVEAVGADLDRVQALIDGSEDLKRLVVSPVFSADDQFKAISALVEKFGFSGLVGNFLKVVARNRRLFALPGSIKAFRLIAARHRGEITADVTSAHALTAAQETELKATLKGVTGKDVAVNVTVDPSILGGLIVKVGSRQIDTSLRTKLSTLKLALKEVG.

It belongs to the ATPase delta chain family. As to quaternary structure, F-type ATPases have 2 components, F(1) - the catalytic core - and F(0) - the membrane proton channel. F(1) has five subunits: alpha(3), beta(3), gamma(1), delta(1), epsilon(1). F(0) has three main subunits: a(1), b(2) and c(10-14). The alpha and beta chains form an alternating ring which encloses part of the gamma chain. F(1) is attached to F(0) by a central stalk formed by the gamma and epsilon chains, while a peripheral stalk is formed by the delta and b chains.

The protein resides in the cell inner membrane. F(1)F(0) ATP synthase produces ATP from ADP in the presence of a proton or sodium gradient. F-type ATPases consist of two structural domains, F(1) containing the extramembraneous catalytic core and F(0) containing the membrane proton channel, linked together by a central stalk and a peripheral stalk. During catalysis, ATP synthesis in the catalytic domain of F(1) is coupled via a rotary mechanism of the central stalk subunits to proton translocation. In terms of biological role, this protein is part of the stalk that links CF(0) to CF(1). It either transmits conformational changes from CF(0) to CF(1) or is implicated in proton conduction. In Sinorhizobium fredii (strain NBRC 101917 / NGR234), this protein is ATP synthase subunit delta.